A 145-amino-acid chain; its full sequence is Dihydrolipoyllysine-residue succinyltransferase component of 2-oxoglutarate dehydrogenase complex, mitochondrial (145 aa).

In terms of domain architecture, Lipoyl-binding spans 4–31 (ITVQTPAFAESVTEGDVRVEGGTPLFTL). Residue S14 is modified to Phosphoserine. K36 and K66 each carry N6-acetyllysine. Active-site residues include H119 and D123.

It belongs to the 2-oxoacid dehydrogenase family. The 2-oxoglutarate dehydrogenase complex is composed of OGDH (2-oxoglutarate dehydrogenase; E1), DLST (dihydrolipoamide succinyltransferase; E2), DLD (dihydrolipoamide dehydrogenase; E3) and the assembly factor KGD4. It contains multiple copies of the three enzymatic components (E1, E2 and E3). In the nucleus, the 2-oxoglutarate dehydrogenase complex associates with KAT2A. Interacts with ABHD11; this interaction maintains the functional lipoylation of the 2-oxoglutarate dehydrogenase complex. The cofactor is (R)-lipoate.

The protein resides in the mitochondrion matrix. It is found in the nucleus. The catalysed reaction is N(6)-[(R)-dihydrolipoyl]-L-lysyl-[protein] + succinyl-CoA = N(6)-[(R)-S(8)-succinyldihydrolipoyl]-L-lysyl-[protein] + CoA. The protein operates within amino-acid degradation; L-lysine degradation via saccharopine pathway; glutaryl-CoA from L-lysine: step 6/6. It participates in carbohydrate metabolism; tricarboxylic acid cycle. Dihydrolipoamide succinyltransferase (E2) component of the 2-oxoglutarate dehydrogenase complex. The 2-oxoglutarate dehydrogenase complex catalyzes the overall conversion of 2-oxoglutarate to succinyl-CoA and CO(2). The 2-oxoglutarate dehydrogenase complex is mainly active in the mitochondrion. A fraction of the 2-oxoglutarate dehydrogenase complex also localizes in the nucleus and is required for lysine succinylation of histones: associates with KAT2A on chromatin and provides succinyl-CoA to histone succinyltransferase KAT2A. This is Dihydrolipoyllysine-residue succinyltransferase component of 2-oxoglutarate dehydrogenase complex, mitochondrial from Mesocricetus auratus (Golden hamster).